We begin with the raw amino-acid sequence, 381 residues long: Probable tRNA sulfurtransferase (381 aa).

Residues 55-163 (GECLENLNKV…DDEAFIYHEK (109 aa)) enclose the THUMP domain. Residues 181–182 (LV), Lys-265, Gly-287, and Gln-296 contribute to the ATP site.

It belongs to the ThiI family.

Its subcellular location is the cytoplasm. It catalyses the reaction [ThiI sulfur-carrier protein]-S-sulfanyl-L-cysteine + a uridine in tRNA + 2 reduced [2Fe-2S]-[ferredoxin] + ATP + H(+) = [ThiI sulfur-carrier protein]-L-cysteine + a 4-thiouridine in tRNA + 2 oxidized [2Fe-2S]-[ferredoxin] + AMP + diphosphate. It carries out the reaction [ThiS sulfur-carrier protein]-C-terminal Gly-Gly-AMP + S-sulfanyl-L-cysteinyl-[cysteine desulfurase] + AH2 = [ThiS sulfur-carrier protein]-C-terminal-Gly-aminoethanethioate + L-cysteinyl-[cysteine desulfurase] + A + AMP + 2 H(+). The protein operates within cofactor biosynthesis; thiamine diphosphate biosynthesis. In terms of biological role, catalyzes the ATP-dependent transfer of a sulfur to tRNA to produce 4-thiouridine in position 8 of tRNAs, which functions as a near-UV photosensor. Also catalyzes the transfer of sulfur to the sulfur carrier protein ThiS, forming ThiS-thiocarboxylate. This is a step in the synthesis of thiazole, in the thiamine biosynthesis pathway. The sulfur is donated as persulfide by IscS. This Methanobrevibacter smithii (strain ATCC 35061 / DSM 861 / OCM 144 / PS) protein is Probable tRNA sulfurtransferase.